Here is a 131-residue protein sequence, read N- to C-terminus: Ribosome-binding factor A (131 aa).

Belongs to the RbfA family. Monomer. Binds 30S ribosomal subunits, but not 50S ribosomal subunits or 70S ribosomes.

Its subcellular location is the cytoplasm. Its function is as follows. One of several proteins that assist in the late maturation steps of the functional core of the 30S ribosomal subunit. Associates with free 30S ribosomal subunits (but not with 30S subunits that are part of 70S ribosomes or polysomes). Required for efficient processing of 16S rRNA. May interact with the 5'-terminal helix region of 16S rRNA. The protein is Ribosome-binding factor A of Chromohalobacter salexigens (strain ATCC BAA-138 / DSM 3043 / CIP 106854 / NCIMB 13768 / 1H11).